The sequence spans 572 residues: Proline--tRNA ligase (572 aa).

It belongs to the class-II aminoacyl-tRNA synthetase family. ProS type 1 subfamily. As to quaternary structure, homodimer.

It is found in the cytoplasm. The enzyme catalyses tRNA(Pro) + L-proline + ATP = L-prolyl-tRNA(Pro) + AMP + diphosphate. Functionally, catalyzes the attachment of proline to tRNA(Pro) in a two-step reaction: proline is first activated by ATP to form Pro-AMP and then transferred to the acceptor end of tRNA(Pro). As ProRS can inadvertently accommodate and process non-cognate amino acids such as alanine and cysteine, to avoid such errors it has two additional distinct editing activities against alanine. One activity is designated as 'pretransfer' editing and involves the tRNA(Pro)-independent hydrolysis of activated Ala-AMP. The other activity is designated 'posttransfer' editing and involves deacylation of mischarged Ala-tRNA(Pro). The misacylated Cys-tRNA(Pro) is not edited by ProRS. The chain is Proline--tRNA ligase from Escherichia fergusonii (strain ATCC 35469 / DSM 13698 / CCUG 18766 / IAM 14443 / JCM 21226 / LMG 7866 / NBRC 102419 / NCTC 12128 / CDC 0568-73).